The following is a 419-amino-acid chain: MSRYVFTSESVTEGHPDKICDQVSDAVLDALLAQDPSSRVACETVVNTGLCLITGEVTSNSQVDFIHLVRNVIREIGYSGARAGGFDATSCAVLVALDQQSPDIAQGVNEADDHSGDPLDKVGAGDQGIMFGYACDDTPELMPLPISLAHRLARQLAAVRHDGSLSYLLPDGKTQVSVVYENDRPVAIDTILISTQHTSEVEGISDENGIRERITQDLWTHVVEPATADLPLKPNREATRFLVNPTGKFVVGGPQGDAGLTGRKIIVDTYGGYARHGGGAFSGKDPTKVDRSAAYAARFVAKCLVAAGLAQRAEVQLSYAIGVAKPVSILVESFGTGKVTNDELTALVQDHFDLRPGAIIEQFKLRQLPQQRGGRFYQDTAAYGHFGRPDLNLPWEDVTDKASTLLQAEAQQQKQGSSL.

His15 is an ATP binding site. Asp17 provides a ligand contact to Mg(2+). Glu43 serves as a coordination point for K(+). L-methionine-binding residues include Glu56 and Gln100. Positions Gln100–Glu110 are flexible loop. ATP contacts are provided by residues Asp171–Lys173, Lys248–Phe249, Asp257, Arg263–Lys264, Ala280, and Lys284. Asp257 provides a ligand contact to L-methionine. Lys288 is a binding site for L-methionine.

It belongs to the AdoMet synthase family. Homotetramer; dimer of dimers. Requires Mg(2+) as cofactor. K(+) is required as a cofactor.

It localises to the cytoplasm. It carries out the reaction L-methionine + ATP + H2O = S-adenosyl-L-methionine + phosphate + diphosphate. It participates in amino-acid biosynthesis; S-adenosyl-L-methionine biosynthesis; S-adenosyl-L-methionine from L-methionine: step 1/1. Its function is as follows. Catalyzes the formation of S-adenosylmethionine (AdoMet) from methionine and ATP. The overall synthetic reaction is composed of two sequential steps, AdoMet formation and the subsequent tripolyphosphate hydrolysis which occurs prior to release of AdoMet from the enzyme. This is S-adenosylmethionine synthase from Prochlorococcus marinus (strain MIT 9303).